Reading from the N-terminus, the 149-residue chain is L-alanine exporter AlaE (149 aa).

4 consecutive transmembrane segments (helical) span residues Phe17 to Met37, Leu43 to Phe63, Leu86 to Ala106, and Ile111 to Tyr131.

Belongs to the AlaE exporter family.

The protein resides in the cell inner membrane. Exports L-alanine. This Aliivibrio salmonicida (strain LFI1238) (Vibrio salmonicida (strain LFI1238)) protein is L-alanine exporter AlaE.